The chain runs to 335 residues: 3-hydroxyproline 2-epimerase (335 aa).

The active-site Proton acceptor is Cys91. Residues 92–93 (GH), Asp251, and 256–257 (GS) each bind substrate.

It belongs to the proline racemase family.

The enzyme catalyses trans-3-hydroxy-L-proline = cis-3-hydroxy-D-proline. It carries out the reaction trans-4-hydroxy-L-proline = cis-4-hydroxy-D-proline. In terms of biological role, catalyzes the epimerization of trans-3-hydroxy-L-proline (t3LHyp) to cis-3-hydroxy-D-proline (c3DHyp) in vitro. Can also catalyze the epimerization of trans-4-hydroxy-L-proline (t3LHyp) to cis-4-hydroxy-D-proline (c4DHyp), albeit with 3.6-fold lower efficiency. Displays no proline racemase activity. The protein is 3-hydroxyproline 2-epimerase of Burkholderia multivorans (strain ATCC 17616 / 249).